A 375-amino-acid polypeptide reads, in one-letter code: 4,4'-diaponeurosporenoate glycosyltransferase (375 aa).

4 helical membrane-spanning segments follow: residues 3 to 23, 164 to 184, 277 to 297, and 330 to 350; these read WLSR…ALIF, FYEG…NVFS, IMAA…GLCL, and FSNL…KIFI.

Belongs to the glycosyltransferase 2 family. CrtQ subfamily.

It localises to the cell membrane. It functions in the pathway carotenoid biosynthesis; staphyloxanthin biosynthesis; staphyloxanthin from farnesyl diphosphate: step 4/5. Functionally, catalyzes the glycosylation of 4,4'-diaponeurosporenoate, i.e. the esterification of glucose at the C1'' position with the carboxyl group of 4,4'-diaponeurosporenic acid, to form glycosyl-4,4'-diaponeurosporenoate. This is a step in the biosynthesis of staphyloxanthin, an orange pigment present in most staphylococci strains. The sequence is that of 4,4'-diaponeurosporenoate glycosyltransferase (crtQ) from Staphylococcus aureus (strain bovine RF122 / ET3-1).